An 850-amino-acid polypeptide reads, in one-letter code: Pentatricopeptide repeat-containing protein At3g49170, chloroplastic (850 aa).

A chloroplast-targeting transit peptide spans 1-50 (MAMISFSFPSPAKLPIKSQPSVSNRINVADRLILRHLNAGDLRGAVSALD). 17 PPR repeats span residues 61–95 (DSVTFSSLLKSCIRARDFRLGKLVHARLIEFDIEP), 96–130 (DSVLYNSLISLYSKSGDSAKAEDVFETMRRFGKRD), 131–164 (VVSWSAMMACYGNNGRELDAIKVFVEFLELGLVP), 165–199 (NDYCYTAVIRACSNSDFVGVGRVTLGFLMKTGHFE), 201–232 (DVCVGCSLIDMFVKGENSFENAYKVFDKMSEL), 233–267 (NVVTWTLMITRCMQMGFPREAIRFFLDMVLSGFES), 268–302 (DKFTLSSVFSACAELENLSLGKQLHSWAIRSGLVD), 303–334 (DVECSLVDMYAKCSADGSVDDCRKVFDRMEDH), 335–370 (SVMSWTALITGYMKNCNLATEAINLFSEMITQGHVE), 372–406 (NHFTFSSAFKACGNLSDPRVGKQVLGQAFKRGLAS), 407–437 (NSSVANSVISMFVKSDRMEDAQRAFESLSEK), 438–472 (NLVSYNTFLDGTCRNLNFEQAFKLLSEITERELGV), 473–507 (SAFTFASLLSGVANVGSIRKGEQIHSQVVKLGLSC), 508–538 (NQPVCNALISMYSKCGSIDTASRVFNFMENR), 539–573 (NVISWTSMITGFAKHGFAIRVLETFNQMIEEGVKP), 574–609 (NEVTYVAILSACSHVGLVSEGWRHFNSMYEDHKIKP), and 610–640 (KMEHYACMVDLLCRAGLLTDAFEFINTMPFQ). The tract at residues 645–720 (VWRTFLGACR…EGGCSWIEVG (76 aa)) is type E motif. The segment at 721–751 (DKIHKFYVGDTAHPNAHQIYDELDRLITEIK) is type E(+) motif. Residues 752 to 850 (RCGYVPDTDL…DGKCSCNDYW (99 aa)) form a type DYW motif region.

This sequence belongs to the PPR family. PCMP-H subfamily.

The protein localises to the plastid. The protein resides in the chloroplast. May play a role in embryogenesis. This chain is Pentatricopeptide repeat-containing protein At3g49170, chloroplastic (EMB2261), found in Arabidopsis thaliana (Mouse-ear cress).